A 200-amino-acid chain; its full sequence is uncharacterized protein (200 aa).

This is an uncharacterized protein from Amazona oratrix (yellow-headed parrot).